The following is an 847-amino-acid chain: Leucine--tRNA ligase (847 aa).

Residues 41-51 carry the 'HIGH' region motif; it reads PYPSGRIHMGH. The short motif at 619–623 is the 'KMSKS' region element; it reads KMSKS. Residue lysine 622 participates in ATP binding.

Belongs to the class-I aminoacyl-tRNA synthetase family.

The protein resides in the cytoplasm. It catalyses the reaction tRNA(Leu) + L-leucine + ATP = L-leucyl-tRNA(Leu) + AMP + diphosphate. This Cereibacter sphaeroides (strain ATCC 17023 / DSM 158 / JCM 6121 / CCUG 31486 / LMG 2827 / NBRC 12203 / NCIMB 8253 / ATH 2.4.1.) (Rhodobacter sphaeroides) protein is Leucine--tRNA ligase.